A 104-amino-acid polypeptide reads, in one-letter code: Urease subunit beta (104 aa).

The protein belongs to the urease beta subunit family. Heterotrimer of UreA (gamma), UreB (beta) and UreC (alpha) subunits. Three heterotrimers associate to form the active enzyme.

The protein localises to the cytoplasm. It carries out the reaction urea + 2 H2O + H(+) = hydrogencarbonate + 2 NH4(+). The protein operates within nitrogen metabolism; urea degradation; CO(2) and NH(3) from urea (urease route): step 1/1. The chain is Urease subunit beta from Mycobacterium bovis (strain BCG / Pasteur 1173P2).